We begin with the raw amino-acid sequence, 230 residues long: Ureidoacrylate amidohydrolase RutB (230 aa).

The active-site Proton acceptor is the D24. K133 is an active-site residue. The Nucleophile role is filled by C166.

This sequence belongs to the isochorismatase family. RutB subfamily.

It carries out the reaction (Z)-3-ureidoacrylate + H2O + H(+) = (Z)-3-aminoacrylate + NH4(+) + CO2. The catalysed reaction is (Z)-3-ureidoacrylate + H2O = (Z)-3-aminoacrylate + carbamate + H(+). It catalyses the reaction (Z)-2-methylureidoacrylate + H2O + H(+) = (Z)-2-methylaminoacrylate + NH4(+) + CO2. Functionally, hydrolyzes ureidoacrylate to form aminoacrylate and carbamate. The carbamate hydrolyzes spontaneously, thereby releasing one of the nitrogen atoms of the pyrimidine ring as ammonia and one of its carbon atoms as CO2. The protein is Ureidoacrylate amidohydrolase RutB of Escherichia coli (strain B / BL21-DE3).